The primary structure comprises 375 residues: Thiamine-phosphate synthase (375 aa).

Positions 1–127 (MTNAESRTVL…AACIESIRYQ (127 aa)) are unknown. Residues 128–375 (CYATFRELEL…SSDVCPLPND (248 aa)) are thiamine-phosphate synthase. Residues 183–185 (QLR) and Asn215 each bind 4-amino-2-methyl-5-(diphosphooxymethyl)pyrimidine. Residues Asp216 and Glu235 each contribute to the Mg(2+) site. Positions 254 and 283 each coordinate 4-amino-2-methyl-5-(diphosphooxymethyl)pyrimidine. Gly315 contacts 2-[(2R,5Z)-2-carboxy-4-methylthiazol-5(2H)-ylidene]ethyl phosphate.

This sequence belongs to the thiamine-phosphate synthase family. Requires Mg(2+) as cofactor.

It carries out the reaction 2-[(2R,5Z)-2-carboxy-4-methylthiazol-5(2H)-ylidene]ethyl phosphate + 4-amino-2-methyl-5-(diphosphooxymethyl)pyrimidine + 2 H(+) = thiamine phosphate + CO2 + diphosphate. It catalyses the reaction 2-(2-carboxy-4-methylthiazol-5-yl)ethyl phosphate + 4-amino-2-methyl-5-(diphosphooxymethyl)pyrimidine + 2 H(+) = thiamine phosphate + CO2 + diphosphate. The catalysed reaction is 4-methyl-5-(2-phosphooxyethyl)-thiazole + 4-amino-2-methyl-5-(diphosphooxymethyl)pyrimidine + H(+) = thiamine phosphate + diphosphate. It participates in cofactor biosynthesis; thiamine diphosphate biosynthesis; thiamine phosphate from 4-amino-2-methyl-5-diphosphomethylpyrimidine and 4-methyl-5-(2-phosphoethyl)-thiazole: step 1/1. Condenses 4-methyl-5-(beta-hydroxyethyl)thiazole monophosphate (THZ-P) and 2-methyl-4-amino-5-hydroxymethyl pyrimidine pyrophosphate (HMP-PP) to form thiamine monophosphate (TMP). The chain is Thiamine-phosphate synthase (thiE) from Rhodopirellula baltica (strain DSM 10527 / NCIMB 13988 / SH1).